A 69-amino-acid polypeptide reads, in one-letter code: UPF0346 protein YuiB (69 aa).

Belongs to the UPF0346 family.

The polypeptide is UPF0346 protein YuiB (yuiB) (Lactococcus lactis subsp. lactis (strain IL1403) (Streptococcus lactis)).